We begin with the raw amino-acid sequence, 261 residues long: Carnitinyl-CoA dehydratase (261 aa).

The active-site Nucleophile is E111. E131 acts as the Proton acceptor in catalysis.

The protein belongs to the enoyl-CoA hydratase/isomerase family.

The enzyme catalyses (R)-carnitinyl-CoA = crotonobetainyl-CoA + H2O. It participates in amine and polyamine metabolism; carnitine metabolism. Its function is as follows. Catalyzes the reversible dehydration of L-carnitinyl-CoA to crotonobetainyl-CoA. The chain is Carnitinyl-CoA dehydratase from Salmonella typhimurium (strain LT2 / SGSC1412 / ATCC 700720).